Consider the following 188-residue polypeptide: dCTP deaminase (188 aa).

A dCTP-binding site is contributed by lysine 109–arginine 114. Catalysis depends on glutamate 135, which acts as the Proton donor/acceptor. DCTP-binding residues include glutamine 154, tyrosine 168, and glutamine 178.

This sequence belongs to the dCTP deaminase family. As to quaternary structure, homotrimer.

The catalysed reaction is dCTP + H2O + H(+) = dUTP + NH4(+). It participates in pyrimidine metabolism; dUMP biosynthesis; dUMP from dCTP (dUTP route): step 1/2. Functionally, catalyzes the deamination of dCTP to dUTP. The sequence is that of dCTP deaminase from Helicobacter pylori (strain G27).